The following is a 298-amino-acid chain: 4-hydroxy-tetrahydrodipicolinate synthase (298 aa).

T48 contacts pyruvate. Y137 functions as the Proton donor/acceptor in the catalytic mechanism. Catalysis depends on K166, which acts as the Schiff-base intermediate with substrate. I207 is a pyruvate binding site.

This sequence belongs to the DapA family. As to quaternary structure, homotetramer; dimer of dimers.

The protein resides in the cytoplasm. It catalyses the reaction L-aspartate 4-semialdehyde + pyruvate = (2S,4S)-4-hydroxy-2,3,4,5-tetrahydrodipicolinate + H2O + H(+). The protein operates within amino-acid biosynthesis; L-lysine biosynthesis via DAP pathway; (S)-tetrahydrodipicolinate from L-aspartate: step 3/4. Catalyzes the condensation of (S)-aspartate-beta-semialdehyde [(S)-ASA] and pyruvate to 4-hydroxy-tetrahydrodipicolinate (HTPA). This is 4-hydroxy-tetrahydrodipicolinate synthase from Campylobacter jejuni subsp. jejuni serotype O:23/36 (strain 81-176).